We begin with the raw amino-acid sequence, 431 residues long: Mevalonate kinase (431 aa).

Residues Lys13, Ser139, and 144 to 150 (GAGLGSS) each bind ATP. Positions 150 and 198 each coordinate Mg(2+). The active-site Proton acceptor is the Asp209.

The protein belongs to the GHMP kinase family. Mevalonate kinase subfamily. In terms of assembly, homodimer.

The protein resides in the cytoplasm. It is found in the cytosol. The catalysed reaction is (R)-mevalonate + ATP = (R)-5-phosphomevalonate + ADP + H(+). It participates in isoprenoid biosynthesis; isopentenyl diphosphate biosynthesis via mevalonate pathway; isopentenyl diphosphate from (R)-mevalonate: step 1/3. In terms of biological role, mevalonate kinase; part of the second module of ergosterol biosynthesis pathway that includes the middle steps of the pathway. ERG12 converts mevalonate into 5-phosphomevalonate. The second module is carried out in the vacuole and involves the formation of farnesyl diphosphate, which is also an important intermediate in the biosynthesis of ubiquinone, dolichol, heme and prenylated proteins. Activity by the mevalonate kinase ERG12 first converts mevalonate into 5-phosphomevalonate. 5-phosphomevalonate is then further converted to 5-diphosphomevalonate by the phosphomevalonate kinase ERG8. The diphosphomevalonate decarboxylase MVD then produces isopentenyl diphosphate. The isopentenyl-diphosphate delta-isomerase IDI1 then catalyzes the 1,3-allylic rearrangement of the homoallylic substrate isopentenyl (IPP) to its highly electrophilic allylic isomer, dimethylallyl diphosphate (DMAPP). Finally the farnesyl diphosphate synthase ERG20 catalyzes the sequential condensation of isopentenyl pyrophosphate with dimethylallyl pyrophosphate, and then with the resultant geranylpyrophosphate to the ultimate product farnesyl pyrophosphate. This is Mevalonate kinase from Candida albicans (strain SC5314 / ATCC MYA-2876) (Yeast).